Here is a 415-residue protein sequence, read N- to C-terminus: tRNA(Met) cytidine acetate ligase (415 aa).

Residues 7–20, glycine 102, asparagine 165, and 190–191 contribute to the ATP site; these read IVEY…HLYH and RI.

This sequence belongs to the TmcAL family.

The protein resides in the cytoplasm. It carries out the reaction cytidine(34) in elongator tRNA(Met) + acetate + ATP = N(4)-acetylcytidine(34) in elongator tRNA(Met) + AMP + diphosphate. In terms of biological role, catalyzes the formation of N(4)-acetylcytidine (ac(4)C) at the wobble position of elongator tRNA(Met), using acetate and ATP as substrates. First activates an acetate ion to form acetyladenylate (Ac-AMP) and then transfers the acetyl group to tRNA to form ac(4)C34. The sequence is that of tRNA(Met) cytidine acetate ligase from Acetivibrio thermocellus (strain ATCC 27405 / DSM 1237 / JCM 9322 / NBRC 103400 / NCIMB 10682 / NRRL B-4536 / VPI 7372) (Clostridium thermocellum).